Here is a 346-residue protein sequence, read N- to C-terminus: UPF0324 membrane protein FN0533 (346 aa).

The next 10 membrane-spanning stretches (helical) occupy residues 5-22 (LYGIILCFLLALPAWKLG), 27-49 (LVGGPVFGIIIGIVIAILLKNRA), 62-81 (VLQYAVILLGFGLNLQTIIS), 86-108 (SLPIIVSTISTSLIIAYILAKLI), 115-137 (VILIGVGSSICGGSAIAATAPVI), 147-169 (AISVIFLFNVIAALIFPTLGDIL), 216-233 (LTRTLAIIPITLFLAVYN), 248-270 (IFPMFIVYFILASIITTVCNYFI), 283-305 (INNVFSFFKHLSKFFIIMAMVAI), and 315-337 (ILSGAKPLTLGFCCWFAISLVSI).

The protein belongs to the UPF0324 family.

The protein localises to the cell membrane. The protein is UPF0324 membrane protein FN0533 of Fusobacterium nucleatum subsp. nucleatum (strain ATCC 25586 / DSM 15643 / BCRC 10681 / CIP 101130 / JCM 8532 / KCTC 2640 / LMG 13131 / VPI 4355).